The sequence spans 443 residues: Transcriptional regulatory protein ZraR (443 aa).

The Response regulatory domain occupies 7–121; that stretch reads DILVVDDDIS…KLQLTLSEAL (115 aa). D56 carries the post-translational modification 4-aspartylphosphate. In terms of domain architecture, Sigma-54 factor interaction spans 141-370; it reads MVGDSPAMRA…LENAVERAVV (230 aa). Positions 172, 173, 329, and 359 each coordinate ATP. A DNA-binding region (H-T-H motif) is located at residues 423 to 442; sequence KTEAARRLGITRKTLLAKLS.

Post-translationally, phosphorylated by ZraS.

It is found in the cytoplasm. With respect to regulation, activity of the ZraS/ZraR two-component system is repressed by the zinc-bound form of ZraP, which probably interacts with the periplasmic region of ZraS. Part of the Zra signaling pathway, an envelope stress response (ESR) system composed of the periplasmic accessory protein ZraP, the histidine kinase ZraS and the transcriptional regulator ZraR. The ZraPSR system contributes to antibiotic resistance and is important for membrane integrity in the presence of membrane-targeting biocides. ZraR is a member of the two-component regulatory system ZraS/ZraR. When activated by ZraS, acts in conjunction with sigma-54 to regulate the expression of zraP in the presence of high Zn(2+) or Pb(2+) concentrations. Also positively autoregulates the expression of the zraSR operon. The polypeptide is Transcriptional regulatory protein ZraR (zraR) (Klebsiella oxytoca).